A 274-amino-acid chain; its full sequence is Large ribosomal subunit protein uL2 (274 aa).

Disordered regions lie at residues 21–59 (KVGL…GGHK) and 223–274 (VAMN…QLKG). Residues 32–42 (SLTSGKKSSGG) show a composition bias toward low complexity. A compositionally biased stretch (basic residues) spans 45-59 (NHGRITTRHRGGGHK). Residues 263-274 (KSSDKYIKQLKG) are compositionally biased toward basic and acidic residues.

It belongs to the universal ribosomal protein uL2 family. Part of the 50S ribosomal subunit. Forms a bridge to the 30S subunit in the 70S ribosome.

Functionally, one of the primary rRNA binding proteins. Required for association of the 30S and 50S subunits to form the 70S ribosome, for tRNA binding and peptide bond formation. It has been suggested to have peptidyltransferase activity; this is somewhat controversial. Makes several contacts with the 16S rRNA in the 70S ribosome. The protein is Large ribosomal subunit protein uL2 of Wolbachia sp. subsp. Drosophila simulans (strain wRi).